We begin with the raw amino-acid sequence, 208 residues long: Protein-L-isoaspartate O-methyltransferase (208 aa).

Ser59 is a catalytic residue.

It belongs to the methyltransferase superfamily. L-isoaspartyl/D-aspartyl protein methyltransferase family.

The protein localises to the cytoplasm. It carries out the reaction [protein]-L-isoaspartate + S-adenosyl-L-methionine = [protein]-L-isoaspartate alpha-methyl ester + S-adenosyl-L-homocysteine. Catalyzes the methyl esterification of L-isoaspartyl residues in peptides and proteins that result from spontaneous decomposition of normal L-aspartyl and L-asparaginyl residues. It plays a role in the repair and/or degradation of damaged proteins. The sequence is that of Protein-L-isoaspartate O-methyltransferase from Yersinia enterocolitica serotype O:8 / biotype 1B (strain NCTC 13174 / 8081).